Reading from the N-terminus, the 133-residue chain is MALKSKVIRPRDFKYRGYTLEELQKMPLEELAKLLPARERRKIKRGFTEQEEKLLRKLRKKGTARTHCRDMVVLPEMVGKVVFVHNGKEFVRVEIKPEMIGHRLGEFALTRRFEKHSGPGVGATRSSKYVPLK.

This sequence belongs to the universal ribosomal protein uS19 family.

Its function is as follows. Protein S19 forms a complex with S13 that binds strongly to the 16S ribosomal RNA. This Archaeoglobus fulgidus (strain ATCC 49558 / DSM 4304 / JCM 9628 / NBRC 100126 / VC-16) protein is Small ribosomal subunit protein uS19 (rps19).